Reading from the N-terminus, the 65-residue chain is Large ribosomal subunit protein bL35 (65 aa).

The disordered stretch occupies residues methionine 1–glycine 20.

This sequence belongs to the bacterial ribosomal protein bL35 family.

The protein is Large ribosomal subunit protein bL35 of Bacteroides thetaiotaomicron (strain ATCC 29148 / DSM 2079 / JCM 5827 / CCUG 10774 / NCTC 10582 / VPI-5482 / E50).